The chain runs to 1311 residues: Zinc finger protein 423 (1311 aa).

Basic residues predominate over residues 1-11 (MSRRKQAKPRS). 3 disordered regions span residues 1–21 (MSRR…EASD), 34–70 (GGLE…EDVE), and 95–123 (AHRC…VASP). Residues 41–54 (ECDRKSSRALEDRN) are compositionally biased toward basic and acidic residues. S55 and S58 each carry phosphoserine. A C2H2-type 1; degenerate zinc finger spans residues 75 to 101 (YTCDHCQQDFESLADLTDHRAHRCPGD). The span at 110-123 (WVASSPSSKDVASP) shows a compositional bias: polar residues. C2H2-type zinc fingers lie at residues 146–168 (YPCQ…EQIH), 174–196 (FKCT…IKLH), 202–224 (YHCH…LKTH), 230–252 (FKCS…MQAH), 271–294 (FMCD…LTLH), 303–326 (LQCI…HQAH), and 331–353 (HKCP…LDSH). Residues 354 to 426 (RQPDSSNHSV…PLRGQKKMRD (73 aa)) are disordered. The span at 373 to 382 (ASMSSATPDS) shows a compositional bias: polar residues. Residues 390–404 (SVASMSSATPDSSAS) show a composition bias toward low complexity. Residues 436–460 (YSCPYCSKRDFTSLAVLEIHLKTIH) form a C2H2-type 9; degenerate zinc finger. 3 C2H2-type zinc fingers span residues 468–491 (HTCQ…RKLH), 507–530 (FHCN…RVSH), and 544–567 (FFCN…QQAH). The C2H2-type 13; atypical zinc-finger motif lies at 590–615 (YSCPYCTNSPIFGSILKLTKHIKENH). The interval 617 to 654 (NIPLAHSKKSKAEQSPVSSDVEVSSPKRQRLSGSANSI) is disordered. Phosphoserine is present on S631. Positions 631-642 (SPVSSDVEVSSP) are enriched in low complexity. 7 consecutive C2H2-type zinc fingers follow at residues 659 to 681 (YPCN…LKLH), 689 to 711 (QACP…LTVH), 719 to 742 (YVCE…LDMH), 747 to 770 (YHCT…AVKH), 777 to 800 (YRCT…KHSH), 808 to 830 (HKCI…ITTH), and 834 to 857 (YNCR…REKH). A C2H2-type 21; degenerate zinc finger spans residues 913-935 (YGCDICGAAYTMEVLLQNHRLRD). 3 C2H2-type zinc fingers span residues 957 to 979 (HKCN…LQTH), 986 to 1008 (YMCP…KVTH), and 1047 to 1069 (FRCV…GTFH). S1081 carries the post-translational modification Phosphoserine. The C2H2-type 25; degenerate zinc finger occupies 1091–1109 (YKCALCLKEFRSKQDLVRL). 5 C2H2-type zinc fingers span residues 1147–1170 (LRCP…QVDH), 1195–1217 (YQCI…VANH), 1225–1247 (HECK…LIEH), 1256–1279 (FKCP…FAVH), and 1286–1309 (YDCS…MSQH). Basic and acidic residues predominate over residues 1163 to 1174 (ESHMQVDHRDLT). The disordered stretch occupies residues 1163–1190 (ESHMQVDHRDLTPETSGPRKGAQTSPVP).

It belongs to the krueppel C2H2-type zinc-finger protein family. Homodimer. Interacts with PARP1, SMAD1 and SMAD4. Interacts with EBF1. Interacts with CEP290. As to expression, expressed in brain, eye, olfactory epithelium, spleen and heart. Expressed in the basal layer, consisting of neural precursor cells and immature sensory neurons of the olfactory epithelium, but not in the mature receptor cells.

The protein resides in the nucleus. In terms of biological role, transcription factor that can both act as an activator or a repressor depending on the context. Plays a central role in BMP signaling and olfactory neurogenesis. Associates with SMADs in response to BMP2 leading to activate transcription of BMP target genes. Acts as a transcriptional repressor via its interaction with EBF1, a transcription factor involved in terminal olfactory receptor neurons differentiation; this interaction preventing EBF1 to bind DNA and activate olfactory-specific genes. Involved in olfactory neurogenesis by participating in a developmental switch that regulates the transition from differentiation to maturation in olfactory receptor neurons. Controls proliferation and differentiation of neural precursors in cerebellar vermis formation. In Rattus norvegicus (Rat), this protein is Zinc finger protein 423 (Znf423).